Here is a 1311-residue protein sequence, read N- to C-terminus: Transcriptional regulator ATRX homolog (1311 aa).

Residues 1–384 (MGKKNPNARH…KQKNKRKHIR (384 aa)) form a disordered region. Residues 28-40 (SRRESATESKSAS) are compositionally biased toward basic and acidic residues. Low complexity predominate over residues 61-83 (KASGKATVSSSSDSDQAVANSSA). Positions 114–125 (RGSQQKNVTIND) are enriched in polar residues. Phosphoserine occurs at positions 126 and 127. Residues 155–166 (SDSEEVDEEEES) are compositionally biased toward acidic residues. The segment covering 181 to 202 (KPEKNSSKASKESIEKRQKAQK) has biased composition (basic and acidic residues). The segment covering 219–237 (RRGSLSSERSSRASSSRAE) has biased composition (low complexity). Over residues 241-265 (RPKRCVVRLKRVSLPKTKPAQKPKK) the composition is skewed to basic residues. A phosphoserine mark is found at Ser267, Ser268, and Ser270. The segment covering 290 to 306 (EADSDYEAPAAEEEEEE) has biased composition (acidic residues). 4 positions are modified to phosphoserine: Ser336, Ser338, Ser342, and Ser343. Positions 336–351 (SESDKGSSDFEPEEKQ) are enriched in basic and acidic residues. Positions 352–361 (KKKGRKRIKK) are enriched in basic residues. In terms of domain architecture, Helicase ATP-binding spans 476–664 (ESQEKPGSGC…YCMIQFVKPN (189 aa)). Residue 489 to 496 (HCMGLGKT) participates in ATP binding. A DEGH box motif is present at residues 615-618 (DEGH). The segment at 837–878 (ASSGKVKKRKTRNGNAGGGDSDSDLEMLGGLGGGSSVQKDDP) is disordered. Residues Ser857 and Ser859 each carry the phosphoserine modification. Residues 905 to 1085 (RLLQQCEAIG…SRHYNQTDLM (181 aa)) enclose the Helicase C-terminal domain. Positions 1285–1311 (MAGGSVAHGPPAAPAPGFEPDKVYEID) are disordered.

Belongs to the SNF2/RAD54 helicase family.

The protein localises to the nucleus. Its subcellular location is the chromosome. It carries out the reaction ATP + H2O = ADP + phosphate + H(+). Its function is as follows. Global transcriptional regulator. Modifies gene expression by affecting chromatin. The chain is Transcriptional regulator ATRX homolog (XNP) from Drosophila melanogaster (Fruit fly).